The primary structure comprises 540 residues: Putative laccase-11 (540 aa).

Plastocyanin-like domains lie at 1–114 (MATV…PPRG), 124–279 (REVP…YYGA), and 389–523 (NFPA…NDGP). Cu cation contacts are provided by H48, H50, H93, and H95. Residues H440, H443, H445, H502, C503, H504, and H508 each contribute to the Cu cation site.

This sequence belongs to the multicopper oxidase family. It depends on Cu cation as a cofactor.

The protein resides in the secreted. Its subcellular location is the extracellular space. The protein localises to the apoplast. The catalysed reaction is 4 hydroquinone + O2 = 4 benzosemiquinone + 2 H2O. Functionally, lignin degradation and detoxification of lignin-derived products. This Oryza sativa subsp. japonica (Rice) protein is Putative laccase-11 (LAC11).